The sequence spans 489 residues: MAESILDRTINRFWYNLGEDCLSESQFDLMIRLMEESLDGDQIIDLTSLPSDNLQVEQVMTTTEDSISEEESEFLLAIGETSEEESDSGEEPEFEQVRMDRTGGTEIPKEEDGEGPSRYNERKRKTPEDRYFPTQPKTIPGQKQTSMGMLNIDCQTNRRTLIDDWAAEIGLIVKTNREDYLDPETILLLMEHKTSGIAKELIRNTRWNRTTGDIIEQVIDAMYTMFLGLNYSDNKVAEKIDEQEKAKIRMTKLQLCDICYLEEFTCDYEKNMYKTELADFPGYINQYLSKIPIIGEKALTRFRHEANGTSIYSLGFAAKIVKEELSKICDLSKKQKKLKKFNKKCCSIGEASTEYGCKKTSTKKYHKKRYKKKYKAYKPYKKKKKFRSGKYFKPKEKKGSKQKYCPKGKKDCRCWICNIEGHYANECPNRQSSEKAHILQQAEKLGLQPIEEPYEGVQEVFILEYKEEEEETSTEESDGSSTSEDSDSD.

The segment at 79–144 (GETSEEESDS…QPKTIPGQKQ (66 aa)) is disordered. Residues 81 to 94 (TSEEESDSGEEPEF) are compositionally biased toward acidic residues. The segment covering 95-110 (EQVRMDRTGGTEIPKE) has biased composition (basic and acidic residues). The Nuclear localization signal signature appears at 122-125 (RKRK). Residues 135 to 144 (QPKTIPGQKQ) are compositionally biased toward polar residues. Residues 412–429 (CRCWICNIEGHYANECPN) form a CCHC-type zinc finger. The disordered stretch occupies residues 467-489 (EEEEETSTEESDGSSTSEDSDSD).

The protein belongs to the caulimoviridae capsid protein family. In terms of assembly, interacts (via nuclear localization signal) with host importin alpha.

It localises to the virion. The protein resides in the host nucleus. Self assembles to form an icosahedral capsid, about 50 nm in diameter, nm, composed of 420 subunits of the viral capsid protein. The capsid encapsulates the genomic dsDNA. Following virus entry into host cell, provides nuclear import of the viral genome. Virus particles do not enter the nucleus, but dock at the nuclear membrane through the interaction with host importins. The chain is Capsid protein from Arabidopsis thaliana (Mouse-ear cress).